We begin with the raw amino-acid sequence, 154 residues long: Nuclear cap-binding protein subunit 2 (154 aa).

Residues Tyr10, Tyr33, 102-106 (RCDWD), 113-117 (RQYGR), and 123-124 (QV) contribute to the mRNA site. Residues 30-108 (STLYMGNLSF…RIIRCDWDAG (79 aa)) enclose the RRM domain.

This sequence belongs to the RRM NCBP2 family. As to quaternary structure, component of the nuclear cap-binding complex (CBC), a heterodimer composed of Cbp80 and Cbp20 that interacts with m7GpppG-capped RNA.

It localises to the nucleus. Its function is as follows. Component of the cap-binding complex (CBC), which binds co-transcriptionally to the 5' cap of pre-mRNAs and is involved in various processes such as pre-mRNA splicing and RNA-mediated gene silencing (RNAi). The CBC complex is involved in miRNA-mediated RNA interference and is required for primary microRNAs (miRNAs) processing. Also involved in innate immunity via the short interfering RNAs (siRNAs) processing machinery by restricting the viral RNA production. In the CBC complex, Cbp20 recognizes and binds capped RNAs (m7GpppG-capped RNA) but requires Cbp80 to stabilize the movement of its N-terminal loop and lock the CBC into a high affinity cap-binding state with the cap structure. The chain is Nuclear cap-binding protein subunit 2 from Bombyx mori (Silk moth).